A 732-amino-acid chain; its full sequence is Elongation factor 2 (732 aa).

The tr-type G domain occupies 19 to 260; sequence ERIRNMGIAA…MVVKHLPNPL (242 aa). Residues 28–35, 94–98, and 148–151 each bind GTP; these read AHIDHGKT, DTPGH, and NKVD. His597 is modified (diphthamide).

It belongs to the TRAFAC class translation factor GTPase superfamily. Classic translation factor GTPase family. EF-G/EF-2 subfamily.

The protein localises to the cytoplasm. In terms of biological role, catalyzes the GTP-dependent ribosomal translocation step during translation elongation. During this step, the ribosome changes from the pre-translocational (PRE) to the post-translocational (POST) state as the newly formed A-site-bound peptidyl-tRNA and P-site-bound deacylated tRNA move to the P and E sites, respectively. Catalyzes the coordinated movement of the two tRNA molecules, the mRNA and conformational changes in the ribosome. The chain is Elongation factor 2 from Thermococcus kodakarensis (strain ATCC BAA-918 / JCM 12380 / KOD1) (Pyrococcus kodakaraensis (strain KOD1)).